The sequence spans 315 residues: MLKMESTQQMAVSIINSSFEAAVVAATSALENMGIEYDYQDIYSRVKNKFDFVMDDSGVKNNLIGKAITIDQALNNKFGSAIRNRNWLADTSRAAKLDEDVNKLRMMLSSKGIDQKMRVLNACFSVKRIPGKSSSIIKCTKLMRDKLERGEVEVDDSFVDEKMEVDTIDWKSRYEQLEQRFESLKSRVNEKYNNWVLKARKMNENMHSLQNVISQQQAHIAELQVYNNKLERDLQNKIGSLTSSIEWYLRSMELDPEIKADIEQQINSIDAINPLHAFDDLESVIRNLISDYDKLFLMFKGLIQRCNYQYSFGCE.

Residues 1–149 (MLKMESTQQM…TKLMRDKLER (149 aa)) are RNA-binding. The dimerization stretch occupies residues 150 to 206 (GEVEVDDSFVDEKMEVDTIDWKSRYEQLEQRFESLKSRVNEKYNNWVLKARKMNENM). Residues 166-237 (DTIDWKSRYE…NKLERDLQNK (72 aa)) adopt a coiled-coil conformation. The interval 170 to 234 (WKSRYEQLEQ…VYNNKLERDL (65 aa)) is interaction with host ZC3H7B. Positions 208-315 (SLQNVISQQQ…CNYQYSFGCE (108 aa)) are interaction with host EIF4G1.

The protein belongs to the rotavirus NSP3 family. As to quaternary structure, homodimer. Interacts (via the coiled-coil region) with host ZC3H7B (via LD motif). Interacts with host EIF4G1.

It is found in the host cytoplasm. Its function is as follows. Plays an important role in stimulating the translation of viral mRNAs. These mRNAs are capped but not polyadenylated, instead terminating in a conserved sequence 'GACC' at the 3' that is recognized by NSP3, which competes with host PABPC1 for EIF4G1 binding. The interaction between NSP3 and host EIF4G1 stabilizes the EIF4E-EIF4G1 interaction, thereby facilitating the initiation of capped mRNA translation. This Rotavirus A (isolate RVA/Monkey/South Africa/SA11-H96/1958/G3P5B[2]) (RV-A) protein is Non-structural protein 3.